A 68-amino-acid polypeptide reads, in one-letter code: Ribosome modulation factor (68 aa).

It belongs to the ribosome modulation factor family.

The protein localises to the cytoplasm. In terms of biological role, during stationary phase, converts 70S ribosomes to an inactive dimeric form (100S ribosomes). This chain is Ribosome modulation factor, found in Alcanivorax borkumensis (strain ATCC 700651 / DSM 11573 / NCIMB 13689 / SK2).